The primary structure comprises 235 residues: Ribitol-5-phosphate cytidylyltransferase (235 aa).

CTP contacts are provided by residues 7–10 (LAGG), 82–88 (GADRNTS), and S113.

The protein belongs to the IspD/TarI cytidylyltransferase family. TarI subfamily.

It catalyses the reaction D-ribitol 5-phosphate + CTP + H(+) = CDP-L-ribitol + diphosphate. It functions in the pathway cell wall biogenesis; poly(ribitol phosphate) teichoic acid biosynthesis. Catalyzes the transfer of the cytidylyl group of CTP to D-ribitol 5-phosphate. The sequence is that of Ribitol-5-phosphate cytidylyltransferase from Streptococcus pneumoniae (strain ATCC 700669 / Spain 23F-1).